Reading from the N-terminus, the 919-residue chain is Bifunctional uridylyltransferase/uridylyl-removing enzyme (919 aa).

Residues 1–373 (MTDPKVPRQR…LAGFNAKSRM (373 aa)) form a uridylyltransferase region. The tract at residues 374–727 (LKGYTVFGGK…CEFDEERGAT (354 aa)) is uridylyl-removing. The 123-residue stretch at 489–611 (VDEHTIRAIG…VQSLERLRHL (123 aa)) folds into the HD domain. ACT domains follow at residues 728 to 811 (LVTV…LAKR) and 839 to 919 (VIEV…LEPA).

Belongs to the GlnD family. Requires Mg(2+) as cofactor.

The catalysed reaction is [protein-PII]-L-tyrosine + UTP = [protein-PII]-uridylyl-L-tyrosine + diphosphate. It catalyses the reaction [protein-PII]-uridylyl-L-tyrosine + H2O = [protein-PII]-L-tyrosine + UMP + H(+). Uridylyltransferase (UTase) activity is inhibited by glutamine, while glutamine activates uridylyl-removing (UR) activity. In terms of biological role, modifies, by uridylylation and deuridylylation, the PII regulatory proteins (GlnB and homologs), in response to the nitrogen status of the cell that GlnD senses through the glutamine level. Under low glutamine levels, catalyzes the conversion of the PII proteins and UTP to PII-UMP and PPi, while under higher glutamine levels, GlnD hydrolyzes PII-UMP to PII and UMP (deuridylylation). Thus, controls uridylylation state and activity of the PII proteins, and plays an important role in the regulation of nitrogen assimilation and metabolism. This Erythrobacter litoralis (strain HTCC2594) protein is Bifunctional uridylyltransferase/uridylyl-removing enzyme.